A 593-amino-acid polypeptide reads, in one-letter code: ATPase family AAA domain-containing protein 3-B (593 aa).

Disordered regions lie at residues M1 to S64, E109 to Q129, and Q145 to A164. Topologically, residues M1–K242 are mitochondrial intermembrane. The segment covering P12–P27 has biased composition (pro residues). Basic and acidic residues-rich tracts occupy residues G33 to S44, R53 to S64, E109 to Q121, and E150 to A164. The stretch at L51 to R215 forms a coiled coil. Residues V243–A260 form a helical membrane-spanning segment. Residues K261–V593 lie on the Mitochondrial matrix side of the membrane. G348–T355 is a binding site for ATP. Over residues A570–G580 the composition is skewed to basic and acidic residues. Residues A570–V593 are disordered.

It belongs to the AAA ATPase family. As to quaternary structure, can form homooligomers. Homodimer formation at the N-terminus may be regulated by ATP and is required for the interaction with the inner surface of the mitochondrial outer membrane and correct mitochondrial homeostasis.

It is found in the mitochondrion inner membrane. The protein localises to the mitochondrion matrix. It localises to the mitochondrion nucleoid. The enzyme catalyses ATP + H2O = ADP + phosphate + H(+). Essential for mitochondrial network organization, mitochondrial metabolism and cell growth at organism and cellular level. May play an important role in mitochondrial protein synthesis. May also participate in mitochondrial DNA replication. May bind to mitochondrial DNA D-loops and contribute to nucleoid stability. Required for enhanced channeling of cholesterol for hormone-dependent steroidogenesis. Involved in mitochondrial-mediated antiviral innate immunity. Required to protect mitochondria from the PERK-mediated unfolded protein response: specifically inhibits the activity of EIF2AK3/PERK at mitochondria-endoplasmic reticulum contact sites, thereby providing a safe haven for mitochondrial protein translation during endoplasmic reticulum stress. Ability to inhibit EIF2AK3/PERK is independent of its ATPase activity. Also involved in the mitochondrial DNA damage response by promoting signaling between damaged genomes and the mitochondrial membrane, leading to activation of the integrated stress response (ISR). The chain is ATPase family AAA domain-containing protein 3-B (atad3-b) from Xenopus laevis (African clawed frog).